The primary structure comprises 234 residues: Synaptogyrin-1 (234 aa).

The residue at position 1 (M1) is an N-acetylmethionine. The Cytoplasmic segment spans residues 1–23 (MEGGAYGAGKAGGAFDPYTLVRQ). The MARVEL domain occupies 20 to 173 (LVRQPHTILR…QAVLAFQRYQ (154 aa)). A helical membrane pass occupies residues 24-44 (PHTILRVVSWVFSIVVFGSIV). Residues 45-71 (NEGYLNNPEEEEEFCIYNRNPNACSYG) are Lumenal-facing. The chain crosses the membrane as a helical span at residues 72 to 92 (VTVGVLAFLTCLLYLALDVYF). Residues 93–103 (PQISSVKDRKK) lie on the Cytoplasmic side of the membrane. Residues 104–124 (AVLSDIGVSAFWAFFWFVGFC) traverse the membrane as a helical segment. Residues 125–148 (FLANQWQVSKPKDNPLNEGTDAAR) are Lumenal-facing. A helical transmembrane segment spans residues 149-169 (AAIAFSFFSIFTWAGQAVLAF). Residues 170–234 (QRYQIGADSA…EPQGYQSQGY (65 aa)) are Cytoplasmic-facing. The tract at residues 201-234 (EPSAGSDPAGMGGTYQHPANAFDAEPQGYQSQGY) is disordered.

This sequence belongs to the synaptogyrin family.

The protein resides in the cytoplasmic vesicle. It localises to the secretory vesicle. The protein localises to the synaptic vesicle membrane. It is found in the melanosome. May play a role in regulated exocytosis. Modulates the localization of synaptophysin/SYP into synaptic-like microvesicles and may therefore play a role in synaptic-like microvesicle formation and/or maturation. Involved in the regulation of short-term and long-term synaptic plasticity. The protein is Synaptogyrin-1 of Mus musculus (Mouse).